Consider the following 501-residue polypeptide: ATP synthase subunit alpha (501 aa).

169–176 provides a ligand contact to ATP; sequence GDRQTGKT.

The protein belongs to the ATPase alpha/beta chains family. As to quaternary structure, F-type ATPases have 2 components, CF(1) - the catalytic core - and CF(0) - the membrane proton channel. CF(1) has five subunits: alpha(3), beta(3), gamma(1), delta(1), epsilon(1). CF(0) has three main subunits: a(1), b(2) and c(9-12). The alpha and beta chains form an alternating ring which encloses part of the gamma chain. CF(1) is attached to CF(0) by a central stalk formed by the gamma and epsilon chains, while a peripheral stalk is formed by the delta and b chains.

The protein localises to the cell membrane. The enzyme catalyses ATP + H2O + 4 H(+)(in) = ADP + phosphate + 5 H(+)(out). In terms of biological role, produces ATP from ADP in the presence of a proton gradient across the membrane. The alpha chain is a regulatory subunit. This Streptococcus mutans serotype c (strain ATCC 700610 / UA159) protein is ATP synthase subunit alpha.